A 149-amino-acid polypeptide reads, in one-letter code: MSKLQRHIKIRELITENIIETQDELVDSLKALDFNVTQATVSRDIKELQLVKVPTTTGQYKYSLPADQRFNPLQKLKRLIVDTFVKIEHASHFIILHTLPGNAHAVGVLIDNLDWEEIMGTICGDDTCLIICRTPEQAEMIKNRFIEML.

It belongs to the ArgR family.

It is found in the cytoplasm. It functions in the pathway amino-acid biosynthesis; L-arginine biosynthesis [regulation]. Regulates arginine biosynthesis genes. This is Arginine repressor from Oceanobacillus iheyensis (strain DSM 14371 / CIP 107618 / JCM 11309 / KCTC 3954 / HTE831).